We begin with the raw amino-acid sequence, 383 residues long: tRNA-specific 2-thiouridylase MnmA (383 aa).

ATP is bound by residues 11–18 (GLSGGVDS) and M37. The segment at 97–99 (NPD) is interaction with target base in tRNA. C102 functions as the Nucleophile in the catalytic mechanism. Residues C102 and C200 are joined by a disulfide bond. An ATP-binding site is contributed by G127. Residues 150–152 (KDQ) form an interaction with tRNA region. The active-site Cysteine persulfide intermediate is C200. The segment at 312–313 (RY) is interaction with tRNA. The tract at residues 361 to 383 (IDTAHPADRSAPPALQTQSTEVV) is disordered.

This sequence belongs to the MnmA/TRMU family.

It is found in the cytoplasm. It carries out the reaction S-sulfanyl-L-cysteinyl-[protein] + uridine(34) in tRNA + AH2 + ATP = 2-thiouridine(34) in tRNA + L-cysteinyl-[protein] + A + AMP + diphosphate + H(+). In terms of biological role, catalyzes the 2-thiolation of uridine at the wobble position (U34) of tRNA, leading to the formation of s(2)U34. The chain is tRNA-specific 2-thiouridylase MnmA from Halorhodospira halophila (strain DSM 244 / SL1) (Ectothiorhodospira halophila (strain DSM 244 / SL1)).